We begin with the raw amino-acid sequence, 115 residues long: NADH-ubiquinone oxidoreductase chain 3 (115 aa).

The next 3 membrane-spanning stretches (helical) occupy residues I3 to W23, F55 to L75, and T86 to W106.

Belongs to the complex I subunit 3 family. Core subunit of respiratory chain NADH dehydrogenase (Complex I) which is composed of 45 different subunits. Interacts with TMEM186. Interacts with TMEM242.

It localises to the mitochondrion inner membrane. The catalysed reaction is a ubiquinone + NADH + 5 H(+)(in) = a ubiquinol + NAD(+) + 4 H(+)(out). Core subunit of the mitochondrial membrane respiratory chain NADH dehydrogenase (Complex I) which catalyzes electron transfer from NADH through the respiratory chain, using ubiquinone as an electron acceptor. Essential for the catalytic activity of complex I. The protein is NADH-ubiquinone oxidoreductase chain 3 of Sus scrofa (Pig).